A 389-amino-acid polypeptide reads, in one-letter code: MRIFKTNVLLRFVNSYIIDSPQPANLSYLWNFGSLLALCLIIQILTGCFLAMHYIPNVDLAFDSIEHIMRDVDNGYILRYTHANVASFFFIFIYVHIGRGLWYGSYRAPRVLLWSIGVIILVLMMAIGFLGYVLPFGQMSLWGATVITNLLSAIPIFGQDIVELIWGGFSVSNATLNRFFSLHYILPFVLAALAVAHMIALHTHGSSNPNGLTSNGDRYAMYPYFIFKDLVTIFAFFLVLSIIVFFYPNLMGHSDNYIPANPMVTPSSIVPEWYLLPFYAILRSIPNKLLGVLAMFGSLLILLIMPFVDFSRTRGNKTLNPINMVFFTIFVCNFITLGLVGANHATEPFIFLGQVCTTIYFAYFFVIVPVTSILQNTFLDIATIINKSA.

A run of 4 helical transmembrane segments spans residues 32-52 (FGSLLALCLIIQILTGCFLAM), 76-98 (YILRYTHANVASFFFIFIYVHIG), 113-133 (LWSIGVIILVLMMAIGFLGYV), and 179-199 (FFSLHYILPFVLAALAVAHMI). Residues histidine 82 and histidine 96 each contribute to the heme b site. 2 residues coordinate heme b: histidine 183 and histidine 197. Histidine 202 contacts a ubiquinone. The next 4 helical transmembrane spans lie at 225–245 (FIFKDLVTIFAFFLVLSIIVF), 289–309 (LLGVLAMFGSLLILLIMPFVD), 322–342 (INMVFFTIFVCNFITLGLVGA), and 349–369 (FIFLGQVCTTIYFAYFFVIVP).

The protein belongs to the cytochrome b family. Fungal cytochrome b-c1 complex contains 10 subunits; 3 respiratory subunits, 2 core proteins and 5 low-molecular weight proteins. Cytochrome b-c1 complex is a homodimer. Requires heme b as cofactor.

Its subcellular location is the mitochondrion inner membrane. In terms of biological role, component of the ubiquinol-cytochrome c reductase complex (complex III or cytochrome b-c1 complex) that is part of the mitochondrial respiratory chain. The b-c1 complex mediates electron transfer from ubiquinol to cytochrome c. Contributes to the generation of a proton gradient across the mitochondrial membrane that is then used for ATP synthesis. The sequence is that of Cytochrome b (COB) from Mycena viridimarginata.